We begin with the raw amino-acid sequence, 73 residues long: Acyl carrier protein homolog (73 aa).

The Carrier domain maps to 1-72; that stretch reads MAIKEWIITQ…DIIVLIEQKS (72 aa). O-(pantetheine 4'-phosphoryl)serine is present on S32.

In terms of processing, 4'-phosphopantetheine is transferred from CoA to a specific serine of the apo-ACP-like protein.

Its pathway is lipid metabolism; fatty acid biosynthesis. Functionally, carrier of the growing fatty acid chain in fatty acid biosynthesis. This chain is Acyl carrier protein homolog, found in Mycoplasmopsis pulmonis (strain UAB CTIP) (Mycoplasma pulmonis).